Here is a 78-residue protein sequence, read N- to C-terminus: ATP synthase subunit c (78 aa).

2 consecutive transmembrane segments (helical) span residues 12–32 (IGAGLACTGMGGAAVGVGHVV) and 54–74 (FIGIAFAEALGIFSFLVALLL).

Belongs to the ATPase C chain family. In terms of assembly, F-type ATPases have 2 components, F(1) - the catalytic core - and F(0) - the membrane proton channel. F(1) has five subunits: alpha(3), beta(3), gamma(1), delta(1), epsilon(1). F(0) has four main subunits: a(1), b(1), b'(1) and c(10-14). The alpha and beta chains form an alternating ring which encloses part of the gamma chain. F(1) is attached to F(0) by a central stalk formed by the gamma and epsilon chains, while a peripheral stalk is formed by the delta, b and b' chains.

Its subcellular location is the cellular chromatophore membrane. F(1)F(0) ATP synthase produces ATP from ADP in the presence of a proton or sodium gradient. F-type ATPases consist of two structural domains, F(1) containing the extramembraneous catalytic core and F(0) containing the membrane proton channel, linked together by a central stalk and a peripheral stalk. During catalysis, ATP synthesis in the catalytic domain of F(1) is coupled via a rotary mechanism of the central stalk subunits to proton translocation. Functionally, key component of the F(0) channel; it plays a direct role in translocation across the membrane. A homomeric c-ring of between 10-14 subunits forms the central stalk rotor element with the F(1) delta and epsilon subunits. The sequence is that of ATP synthase subunit c from Rhodobacter capsulatus (Rhodopseudomonas capsulata).